The primary structure comprises 287 residues: Orotidine 5'-phosphate decarboxylase (287 aa).

Lys97 acts as the Proton donor in catalysis.

It belongs to the OMP decarboxylase family. Type 2 subfamily.

It carries out the reaction orotidine 5'-phosphate + H(+) = UMP + CO2. Its pathway is pyrimidine metabolism; UMP biosynthesis via de novo pathway; UMP from orotate: step 2/2. This Clostridium perfringens (strain ATCC 13124 / DSM 756 / JCM 1290 / NCIMB 6125 / NCTC 8237 / Type A) protein is Orotidine 5'-phosphate decarboxylase.